The primary structure comprises 431 residues: Putative malic acid transport protein (431 aa).

10 consecutive transmembrane segments (helical) span residues 30–50 (FTWA…VTSL), 62–82 (GKII…CITF), 101–121 (VLFM…LYPY), 136–156 (ILYW…FYSL), 167–187 (IIPA…IASA), 201–221 (VVAG…VYAV), 239–259 (GMFI…DLAF), 284–304 (FMAL…FVSV), 318–338 (VSWF…QELG), and 346–366 (VCIV…ILIL). The span at 402-424 (EEEKDEAERSKRKAEESDGKTTR) shows a compositional bias: basic and acidic residues. The tract at residues 402-431 (EEEKDEAERSKRKAEESDGKTTRELTSGGL) is disordered.

This sequence belongs to the tellurite-resistance/dicarboxylate transporter (TDT) family.

It localises to the membrane. The sequence is that of Putative malic acid transport protein from Schizosaccharomyces pombe (strain 972 / ATCC 24843) (Fission yeast).